The following is a 769-amino-acid chain: Spastin (769 aa).

The disordered stretch occupies residues 1-100 (MVRTKNQSSS…TSGNVPRGGQ (100 aa)). Residues 1-113 (MVRTKNQSSS…KQNLYVVSFP (113 aa)) lie on the Cytoplasmic side of the membrane. Residues 1-201 (MVRTKNQSSS…QTLEMAASRG (201 aa)) form a required for localization to punctate cytoplasmic foci region. Residues 8-19 (SSSSSASSSTKS) are compositionally biased toward low complexity. The segment covering 24–33 (SGGGGGGGGS) has biased composition (gly residues). The segment covering 54–63 (SSKLSSNRQR) has biased composition (polar residues). Low complexity predominate over residues 64–78 (TTTTITTTTTTPGSS). An intramembrane region (helical) is located at residues 114 to 134 (IIFLFNVLRSLIYQLFCIFRY). Topologically, residues 135-769 (LYGASTKVIY…WSQDYGDITI (635 aa)) are cytoplasmic. The segment at 199–769 (SRGGTGAGGY…WSQDYGDITI (571 aa)) is sufficient for interaction with microtubules and microtubule severing. In terms of domain architecture, MIT spans 224–299 (HRRAFEYISK…SMARDRLHFL (76 aa)). A disordered region spans residues 314–462 (KEQPKKQLPH…NAASGSGSGA (149 aa)). Positions 334-344 (TTTSSGSSSSS) are enriched in low complexity. 2 stretches are compositionally biased toward polar residues: residues 395-413 (NKSQ…STSV) and 434-450 (QFSS…RTPI). A compositionally biased stretch (low complexity) spans 451-462 (NNNAASGSGSGA). The required for interaction with microtubules stretch occupies residues 452–466 (NNAASGSGSGASTPL). 534-541 (GPPGNGKT) contributes to the ATP binding site.

The protein belongs to the AAA ATPase family. Spastin subfamily. In terms of assembly, homohexamer. The homohexamer is stabilized by ATP-binding. The homohexamer may adopt a ring conformation through which microtubules pass prior to being severed. Interacts with microtubules. Interacts with atl; may be involved in microtubule dynamics.

The protein localises to the membrane. The protein resides in the cytoplasm. It localises to the cytoskeleton. It is found in the microtubule organizing center. Its subcellular location is the centrosome. The protein localises to the chromosome. The protein resides in the lipid droplet. It catalyses the reaction n ATP + n H2O + a microtubule = n ADP + n phosphate + (n+1) alpha/beta tubulin heterodimers.. Functionally, ATP-dependent microtubule severing protein. Stimulates microtubule minus-end depolymerization and poleward microtubule flux in the mitotic spindle. Regulates microtubule stability in the neuromuscular junction synapse. Involved in lipid metabolism by regulating the size and distribution of lipid droplets. Involved in axon regeneration by regulating microtubule severing. This Drosophila virilis (Fruit fly) protein is Spastin.